We begin with the raw amino-acid sequence, 292 residues long: tRNA dimethylallyltransferase (292 aa).

10 to 17 (GPTASGKS) lines the ATP pocket. 12–17 (TASGKS) contacts substrate. Interaction with substrate tRNA regions lie at residues 35–38 (DSMQ) and 159–163 (QRIVR).

Belongs to the IPP transferase family. As to quaternary structure, monomer. Mg(2+) serves as cofactor.

It catalyses the reaction adenosine(37) in tRNA + dimethylallyl diphosphate = N(6)-dimethylallyladenosine(37) in tRNA + diphosphate. Catalyzes the transfer of a dimethylallyl group onto the adenine at position 37 in tRNAs that read codons beginning with uridine, leading to the formation of N6-(dimethylallyl)adenosine (i(6)A). The protein is tRNA dimethylallyltransferase of Chelativorans sp. (strain BNC1).